The sequence spans 540 residues: Chaperonin GroEL (540 aa).

ATP is bound by residues 29-32 (TLGP), 86-90 (DGTTT), Gly413, 478-480 (DAL), and Asp494.

It belongs to the chaperonin (HSP60) family. As to quaternary structure, forms a cylinder of 14 subunits composed of two heptameric rings stacked back-to-back. Interacts with the co-chaperonin GroES.

The protein resides in the cytoplasm. The catalysed reaction is ATP + H2O + a folded polypeptide = ADP + phosphate + an unfolded polypeptide.. Functionally, together with its co-chaperonin GroES, plays an essential role in assisting protein folding. The GroEL-GroES system forms a nano-cage that allows encapsulation of the non-native substrate proteins and provides a physical environment optimized to promote and accelerate protein folding. The chain is Chaperonin GroEL from Clostridioides difficile (Peptoclostridium difficile).